The chain runs to 378 residues: Putative F-box protein At3g24580 (378 aa).

Residues 1-47 (MTKMSNLPNDLAEEVLSRVSLTSLRNVRLTCKDWNTLSKGESFAKNH) form the F-box domain.

This is Putative F-box protein At3g24580 from Arabidopsis thaliana (Mouse-ear cress).